We begin with the raw amino-acid sequence, 149 residues long: Arginine repressor (149 aa).

Belongs to the ArgR family.

The protein localises to the cytoplasm. It functions in the pathway amino-acid biosynthesis; L-arginine biosynthesis [regulation]. Regulates arginine biosynthesis genes. This Bacillus velezensis (strain DSM 23117 / BGSC 10A6 / LMG 26770 / FZB42) (Bacillus amyloliquefaciens subsp. plantarum) protein is Arginine repressor.